The following is a 376-amino-acid chain: Probable sister chromatid cohesion protein DCC1 (376 aa).

Positions 213–232 are disordered; it reads QKSPTNSGGGGEEIKGGGGD. The segment covering 219–232 has biased composition (gly residues); the sequence is SGGGGEEIKGGGGD.

It belongs to the DCC1 family.

Its subcellular location is the nucleus. Functionally, loads PCNA onto primed templates regulating velocity, spacing and restart activity of replication forks. May couple DNA replication to sister chromatid cohesion. The polypeptide is Probable sister chromatid cohesion protein DCC1 (Dictyostelium discoideum (Social amoeba)).